The following is a 206-amino-acid chain: Protein GrpE (206 aa).

Residues 1–36 (MTDSNGPKDNNQDQAQAAADPVVSKPYIMPDDPEDG) are disordered.

The protein belongs to the GrpE family. Homodimer.

Its subcellular location is the cytoplasm. Its function is as follows. Participates actively in the response to hyperosmotic and heat shock by preventing the aggregation of stress-denatured proteins, in association with DnaK and GrpE. It is the nucleotide exchange factor for DnaK and may function as a thermosensor. Unfolded proteins bind initially to DnaJ; upon interaction with the DnaJ-bound protein, DnaK hydrolyzes its bound ATP, resulting in the formation of a stable complex. GrpE releases ADP from DnaK; ATP binding to DnaK triggers the release of the substrate protein, thus completing the reaction cycle. Several rounds of ATP-dependent interactions between DnaJ, DnaK and GrpE are required for fully efficient folding. The polypeptide is Protein GrpE (Rhodopseudomonas palustris (strain HaA2)).